The primary structure comprises 100 residues: Replication restart protein PriB (100 aa).

The 99-residue stretch at 1 to 99 (MGFNNLVSLA…LRIQNIQEYK (99 aa)) folds into the SSB domain.

This sequence belongs to the PriB family. In terms of assembly, homodimer. Interacts with PriA and DnaT. Component of the replication restart primosome. Primosome assembly occurs via a 'hand-off' mechanism. PriA binds to replication forks, subsequently PriB then DnaT bind; DnaT then displaces ssDNA to generate the helicase loading substrate.

Its function is as follows. Involved in the restart of stalled replication forks, which reloads the replicative helicase on sites other than the origin of replication; the PriA-PriB pathway is the major replication restart pathway. During primosome assembly it facilitates complex formation between PriA and DnaT on DNA; stabilizes PriA on DNA. Stimulates the DNA unwinding activity of PriA helicase. The polypeptide is Replication restart protein PriB (Neisseria meningitidis serogroup B (strain ATCC BAA-335 / MC58)).